Reading from the N-terminus, the 549-residue chain is MNKRGKYTTLNLEEKMKVLSRIEAGRSLKSVMDEFGISKSTFYDIKKNKKLILDFVLKQDMPLVGAEKRKRTTGAKYGDVDDAVYMWYQQKRSAGVPVRGVELQAAAERFARCFGRTDFKASTGWLFRFRNRHAIGNRKGCGEQVLSSVSENVEPFRQKLSMIIKEEKLCLAQLYSGDETDLFWKSMPENSQASRKDICLPGKKINKERLSAFLCANADGTHKLKSIIIGKSKLPKSVKEDTSTLPVIYKPSKDVWFTRELFSEWFFQNFVPEVRHFQLNVLRFHDEDVRALLLLDSCPAHPSSESLTSEDGRIKCMFFPHNTSTLIQPMNQGVILSCKRLYRWKQLEESLVIFEESDDEQEKGDKGVSKIKIYNIKSAIFNWAKSWEEVKQITIANAWENLLYKKEPEYDFQGLEHGDYREILEKCGELETKLDDDRVWLNGDEEKGCLLKTKGGITKEVVQKGGEAEKQTAEFKLSAVRESLDYLLDFVDATPEFQRFHFTLKEMQQEIVKKQFQSKIHSRIGSFLKPRPHNIKDSFSGPSTSGSNH.

Residues 1–52 (MNKRGKYTTLNLEEKMKVLSRIEAGRSLKSVMDEFGISKSTFYDIKKNKKLI) form the HTH psq-type domain. 2 DNA-binding regions (H-T-H motif) span residues 28 to 48 (LKSV…IKKN) and 101 to 132 (VELQ…FRNR). The HTH CENPB-type domain occupies 68–139 (KRKRTTGAKY…RNRHAIGNRK (72 aa)). Residues 169-399 (LCLAQLYSGD…VKQITIANAW (231 aa)) enclose the DDE-1 domain. The interval 527–549 (FLKPRPHNIKDSFSGPSTSGSNH) is disordered. The span at 540–549 (SGPSTSGSNH) shows a compositional bias: polar residues.

This sequence belongs to the tigger transposable element derived protein family. In terms of tissue distribution, expressed in all tissues tested. Higher expression in testis and ovary.

The protein localises to the nucleus. The chain is Tigger transposable element-derived protein 7 (TIGD7) from Homo sapiens (Human).